The following is a 394-amino-acid chain: ATP phosphoribosyltransferase regulatory subunit (394 aa).

The protein belongs to the class-II aminoacyl-tRNA synthetase family. HisZ subfamily. In terms of assembly, heteromultimer composed of HisG and HisZ subunits.

Its subcellular location is the cytoplasm. It functions in the pathway amino-acid biosynthesis; L-histidine biosynthesis; L-histidine from 5-phospho-alpha-D-ribose 1-diphosphate: step 1/9. In terms of biological role, required for the first step of histidine biosynthesis. May allow the feedback regulation of ATP phosphoribosyltransferase activity by histidine. This is ATP phosphoribosyltransferase regulatory subunit from Geobacillus kaustophilus (strain HTA426).